Consider the following 71-residue polypeptide: UPF0346 protein SPT_1257 (71 aa).

The protein belongs to the UPF0346 family.

This Streptococcus pneumoniae (strain Taiwan19F-14) protein is UPF0346 protein SPT_1257.